We begin with the raw amino-acid sequence, 418 residues long: Protein FAM53A (418 aa).

2 disordered regions span residues 198-236 (TSPV…FNPR) and 248-269 (ETGN…LSRR). A compositionally biased stretch (low complexity) spans 205-229 (SSASSGFVDSSEGSTSSSTRWNSGG). Residues 248 to 265 (ETGNLLPSANSTPTSTPE) show a composition bias toward polar residues. The Nuclear localization signal signature appears at 285 to 293 (KKSRLKRRR).

Belongs to the FAM53 family.

It localises to the nucleus. In terms of biological role, may play an important role in neural development; the dorsomedial roof of the third ventricle. This Gallus gallus (Chicken) protein is Protein FAM53A.